A 300-amino-acid polypeptide reads, in one-letter code: Delta-9 desaturase-like 4 protein (300 aa).

Transmembrane regions (helical) follow at residues 39 to 59 (VVVIVHFLCLLAPFNFKWEAL) and 61 to 81 (FGLVLFALTTLSITFSFHRNL). Positions 78–83 (HRNLSH) match the Histidine box-1 motif. Positions 115-119 (HRFHH) match the Histidine box-2 motif. The next 2 membrane-spanning stretches (helical) occupy residues 175 to 195 (IAVHILMFWTILYLYGGLPYL) and 200 to 220 (GVGIFIGYHVTWLVNSACHIW). The Histidine box-3 signature appears at 247-251 (HNNHH).

This sequence belongs to the fatty acid desaturase type 1 family. Fe cation serves as cofactor.

The protein resides in the endoplasmic reticulum membrane. It participates in lipid metabolism; polyunsaturated fatty acid biosynthesis. In Arabidopsis thaliana (Mouse-ear cress), this protein is Delta-9 desaturase-like 4 protein.